The primary structure comprises 257 residues: Phosphonates import ATP-binding protein PhnC (257 aa).

One can recognise an ABC transporter domain in the interval 2–246 (IEFRNVSKVY…KFAEIYGDVA (245 aa)). 35 to 42 (GLSGAGKS) lines the ATP pocket.

Belongs to the ABC transporter superfamily. Phosphonates importer (TC 3.A.1.9.1) family. As to quaternary structure, the complex is composed of two ATP-binding proteins (PhnC), two transmembrane proteins (PhnE) and a solute-binding protein (PhnD).

It is found in the cell membrane. The enzyme catalyses phosphonate(out) + ATP + H2O = phosphonate(in) + ADP + phosphate + H(+). Its function is as follows. Part of the ABC transporter complex PhnCDE involved in phosphonates import. Responsible for energy coupling to the transport system. In Bacillus cereus (strain ATCC 10987 / NRS 248), this protein is Phosphonates import ATP-binding protein PhnC.